The sequence spans 109 residues: Small ribosomal subunit protein uS10c (109 aa).

It belongs to the universal ribosomal protein uS10 family. Part of the 30S ribosomal subunit.

The protein resides in the plastid. It is found in the chloroplast. Involved in the binding of tRNA to the ribosomes. The sequence is that of Small ribosomal subunit protein uS10c from Cyanidium caldarium (Red alga).